We begin with the raw amino-acid sequence, 131 residues long: uncharacterized protein (131 aa).

A compositionally biased stretch (low complexity) spans 31–40 (AAATSRAAPL). The segment at 31–131 (AAATSRAAPL…EAKTEQTKTP (101 aa)) is disordered.

This is an uncharacterized protein from Homo sapiens (Human).